Here is a 161-residue protein sequence, read N- to C-terminus: uncharacterized protein (161 aa).

A run of 4 helical transmembrane segments spans residues 22 to 42 (LFFI…VFGH), 43 to 63 (LTVG…ALLV), 89 to 109 (LAII…AGLG), and 110 to 130 (VVFG…LPVL). The tract at residues 141-161 (VATYSSNGQTGGSEGRSASDD) is disordered.

The protein to M.leprae ML1138.

It is found in the cell membrane. This is an uncharacterized protein from Mycobacterium bovis (strain ATCC BAA-935 / AF2122/97).